A 522-amino-acid chain; its full sequence is 2-isopropylmalate synthase (522 aa).

The Pyruvate carboxyltransferase domain occupies 5-267; sequence VIIFDTTLRD…YTNINAREIH (263 aa). 4 residues coordinate Mn(2+): aspartate 14, histidine 202, histidine 204, and asparagine 238. The regulatory domain stretch occupies residues 392–522; sequence VMEQLVVQSD…MQQTRELGGV (131 aa).

Belongs to the alpha-IPM synthase/homocitrate synthase family. LeuA type 1 subfamily. As to quaternary structure, homodimer. Requires Mn(2+) as cofactor.

The protein localises to the cytoplasm. The enzyme catalyses 3-methyl-2-oxobutanoate + acetyl-CoA + H2O = (2S)-2-isopropylmalate + CoA + H(+). It functions in the pathway amino-acid biosynthesis; L-leucine biosynthesis; L-leucine from 3-methyl-2-oxobutanoate: step 1/4. Functionally, catalyzes the condensation of the acetyl group of acetyl-CoA with 3-methyl-2-oxobutanoate (2-ketoisovalerate) to form 3-carboxy-3-hydroxy-4-methylpentanoate (2-isopropylmalate). The protein is 2-isopropylmalate synthase of Shewanella amazonensis (strain ATCC BAA-1098 / SB2B).